We begin with the raw amino-acid sequence, 456 residues long: Chitin synthase regulatory factor 1 (456 aa).

Disordered stretches follow at residues 1–20 (MPAS…ALLV), 38–74 (ESPL…SLSS), and 139–158 (SKPS…SGSE). Low complexity predominate over residues 140–158 (KPSLSSNSSDSSFSKSGSE). A phosphoserine mark is found at Ser227 and Ser230. 4 Sel1-like repeats span residues 293-327 (NFVP…SLGH), 328-364 (DRSS…DKGN), 365-402 (ADAM…MLGH), and 403-438 (APAC…INDS).

Involved in chitin biosynthesis. The protein is Chitin synthase regulatory factor 1 (chr1) of Schizosaccharomyces pombe (strain 972 / ATCC 24843) (Fission yeast).